The sequence spans 250 residues: Snake venom serine protease pictobin (250 aa).

The first 11 residues, 1-11 (ANLLILQVSYA), serve as a signal peptide directing secretion. Positions 12-17 (QKSSEL) are excised as a propeptide. The Peptidase S1 domain occupies 18 to 241 (VIGGDECNIN…HLHWILSIIA (224 aa)). Intrachain disulfides connect Cys24-Cys155, Cys42-Cys58, Cys134-Cys202, Cys166-Cys181, and Cys192-Cys217. His57 acts as the Charge relay system in catalysis. N-linked (GlcNAc...) asparagine glycosylation is found at Asn71 and Asn95. Asp102 serves as the catalytic Charge relay system. Residues Asn146 and Asn162 are each glycosylated (N-linked (GlcNAc...) asparagine). Residue Ser196 is the Charge relay system of the active site. Residue Asn243 is glycosylated (N-linked (GlcNAc...) asparagine).

It belongs to the peptidase S1 family. Snake venom subfamily. As to quaternary structure, monomer. As to expression, expressed by the venom gland.

The protein localises to the secreted. Functionally, snake venom serine protease that may impair the hemostatic system of the prey. This Bothrops pictus (Desert lancehead) protein is Snake venom serine protease pictobin.